Consider the following 654-residue polypeptide: MSEASSEDLVPPLEAGAAPYREEEEAAKKKKEKKKKSKGLANVFCVFTKGKKKKGQPSSAEPEDAAGSRQGLDGPPPTVEELKAALERGQLEAARPLLALERELAAAAAAGGVSEEELVRRQSKVEALYELLRDQVLGVLRRPLEAPPERLRQALAVVAEQEREDRQAAAAGPGTSGLAATRPRRWLQLWRRGVAEAAEERMGQRPAAGAEVPESVFLHLGRTMKEDLEAVVERLKPLFPAEFGVVAAYAESYHQHFAAHLAAVAQFELCERDTYMLLLWVQNLYPNDIINSPKLVGELQGMGLGSLLPPRQIRLLEATFLSSEAANVRELMDRALELEARRWAEDVPPQRLDGHCHSELAIDIIQITSQAQAKAESITLDLGSQIKRVLLVELPAFLRSYQRAFNEFLERGKQLTNYRANVIANINNCLSFRMSMEQNWQVPQDTLSLLLGPLGELKSHGFDTLLQNLHEDLKPLFKRFTHTRWAAPVETLENIIATVDTRLPEFSELQGCFREELMEALHLHLVKEYIIQLSKGRLVLKTAEQQQQLAGYILANADTIQHFCTQHGSPATWLQPALPTLAEIIRLQDPSAIKIEVATYATCYPDFSKGHLSAILAIKGNLSNSEVKRIRSILDVSMGAQEPSRPLFSLIKVG.

2 disordered regions span residues 1–38 (MSEA…KKSK) and 50–78 (GKKK…PPPT). Over residues 28-38 (KKKKEKKKKSK) the composition is skewed to basic residues.

Belongs to the SEC6 family.

In terms of biological role, may play a role as a mediator of inflammation and angiogenesis. The chain is Tumor necrosis factor alpha-induced protein 2 (TNFAIP2) from Homo sapiens (Human).